A 122-amino-acid chain; its full sequence is Large ribosomal subunit protein uL18 (122 aa).

This sequence belongs to the universal ribosomal protein uL18 family. As to quaternary structure, part of the 50S ribosomal subunit; part of the 5S rRNA/L5/L18/L25 subcomplex. Contacts the 5S and 23S rRNAs.

In terms of biological role, this is one of the proteins that bind and probably mediate the attachment of the 5S RNA into the large ribosomal subunit, where it forms part of the central protuberance. The polypeptide is Large ribosomal subunit protein uL18 (Dictyoglomus turgidum (strain DSM 6724 / Z-1310)).